Here is a 316-residue protein sequence, read N- to C-terminus: protein SLOW GREEN 1, chloroplastic (316 aa).

Residues Met1 to Arg39 constitute a chloroplast transit peptide. TPR repeat units lie at residues Val118–Glu151, Thr152–Ser185, Arg226–Asp259, and Arg261–Lys293.

Ubiquitous. Preferentially expressed in newly formed green tissues.

It localises to the plastid. Its subcellular location is the chloroplast. Its function is as follows. Required for the early stage of chloroplast development. May be involved in chloroplast protein biosynthesis and/or degradation. The chain is protein SLOW GREEN 1, chloroplastic from Arabidopsis thaliana (Mouse-ear cress).